Consider the following 383-residue polypeptide: Proton extrusion protein PxcA (383 aa).

Helical transmembrane passes span Ile-163 to Ile-183, Ala-258 to Ala-278, Ile-306 to Leu-326, and Phe-341 to Ile-361.

This sequence belongs to the CemA family.

The protein localises to the cell inner membrane. Required for H(+) efflux immediately after light irradiation to form a rapid H(+) concentration gradient across the thylakoid membranes. Together with PxcL, contributes to transient H(+) uptake following dark to light transition. The polypeptide is Proton extrusion protein PxcA (Synechococcus sp. (strain CC9902)).